The sequence spans 363 residues: NudC domain-containing protein 3 (363 aa).

Residues 120-143 (AADLSGPQEVEKEEPPGSQDPEHT) are disordered. Over residues 128–143 (EVEKEEPPGSQDPEHT) the composition is skewed to basic and acidic residues. The CS domain maps to 187–279 (AIRENYIWSQ…VGEYWWSAIL (93 aa)). 2 positions are modified to phosphoserine: Ser342 and Ser357.

The polypeptide is NudC domain-containing protein 3 (Nudcd3) (Mus musculus (Mouse)).